The chain runs to 351 residues: Foldase protein PrsA 1 (351 aa).

A signal peptide spans methionine 1–alanine 22. Cysteine 23 carries N-palmitoyl cysteine lipidation. Residue cysteine 23 is the site of S-diacylglycerol cysteine attachment. Positions threonine 145–lysine 240 constitute a PpiC domain. 2 stretches are compositionally biased toward low complexity: residues lysine 303–serine 317 and glutamate 326–glutamine 351. Residues lysine 303–glutamine 351 are disordered.

The protein belongs to the PrsA family.

The protein resides in the cell membrane. It carries out the reaction [protein]-peptidylproline (omega=180) = [protein]-peptidylproline (omega=0). In terms of biological role, plays a major role in protein secretion by helping the post-translocational extracellular folding of several secreted proteins. This chain is Foldase protein PrsA 1 (prsA1), found in Streptococcus pyogenes serotype M1.